A 975-amino-acid polypeptide reads, in one-letter code: Probable dipeptidyl-aminopeptidase B (975 aa).

A compositionally biased stretch (basic and acidic residues) spans 1–20 (MAEHGHNMWEEEPSKGRDSL). The segment at 1–111 (MAEHGHNMWE…LSAASGSAGK (111 aa)) is disordered. The Cytoplasmic segment spans residues 1–125 (MAEHGHNMWE…YRMMDRGLRR (125 aa)). Residues 22-31 (SDSSASTTSL) are compositionally biased toward low complexity. Over residues 68-84 (LDDEDPLKDEASGDYDL) the composition is skewed to acidic residues. A helical; Signal-anchor for type II membrane protein transmembrane segment spans residues 126–146 (VLIIASLVFVTAWVGGLFIYI). At 147–975 (SHKSYLHGSE…IDNAKPQGKR (829 aa)) the chain is on the vacuolar side. Residues Asn-207, Asn-397, and Asn-622 are each glycosylated (N-linked (GlcNAc...) asparagine). The active-site Charge relay system is the Ser-826. Asn-885 is a glycosylation site (N-linked (GlcNAc...) asparagine). Active-site charge relay system residues include Asp-903 and His-936.

It belongs to the peptidase S9B family.

The protein resides in the vacuole membrane. The catalysed reaction is Release of an N-terminal dipeptide, Xaa-Yaa-|-Zaa-, from a polypeptide, preferentially when Yaa is Pro, provided Zaa is neither Pro nor hydroxyproline.. Its function is as follows. Type IV dipeptidyl-peptidase which removes N-terminal dipeptides sequentially from polypeptides having unsubstituted N-termini provided that the penultimate residue is proline. In Grosmannia clavigera (strain kw1407 / UAMH 11150) (Blue stain fungus), this protein is Probable dipeptidyl-aminopeptidase B (DAPB).